A 354-amino-acid polypeptide reads, in one-letter code: MTKSVIKTVEWSDEGVVLVDQTKLPTEEVYVTCGTYEEVAVAIKDMIVRGAPAIGVTAAMGIALGVRDAKASTLSELRQMFGMICRTMGETRPTAVNLFWAIRRMQRKFEELSNMPLAVIKAEMVFEAKRIHLEDIAANQAMGRNGAVLMPSEGGVLTHCNAGALATAGYGTALGVIRAAVESGKNIRVFADETRPFLQGARLTAWELMKDGIDTTVISDNMAGAMMAQGKIQAVVVGADRIAANGDVANKIGTYTVAVLAKEHGIPFYVAAPWSTIDLDTPDGSKIPIEQRNGREVTHIAGKQMTPDNVRIENPAFDVTPSKYVTAIITERGVAKAPYDESLRKLAETETVSA.

Substrate contacts are provided by residues 49-51, arginine 92, and glutamine 199; that span reads RGA. The active-site Proton donor is aspartate 240. A substrate-binding site is contributed by 250–251; sequence NK.

It belongs to the eIF-2B alpha/beta/delta subunits family. MtnA subfamily.

The catalysed reaction is 5-(methylsulfanyl)-alpha-D-ribose 1-phosphate = 5-(methylsulfanyl)-D-ribulose 1-phosphate. The protein operates within amino-acid biosynthesis; L-methionine biosynthesis via salvage pathway; L-methionine from S-methyl-5-thio-alpha-D-ribose 1-phosphate: step 1/6. Catalyzes the interconversion of methylthioribose-1-phosphate (MTR-1-P) into methylthioribulose-1-phosphate (MTRu-1-P). This chain is Methylthioribose-1-phosphate isomerase, found in Koribacter versatilis (strain Ellin345).